The chain runs to 204 residues: Pro-hevein (204 aa).

The first 17 residues, 1-17, serve as a signal peptide directing secretion; sequence MNIFIVVLLCLTGVAIA. Residues 18–60 enclose the Chitin-binding type-1 domain; that stretch reads EQCGRQAGGKLCPNNLCCSQWGWCGSTDEYCSPDHNCQSNCKD. Disulfide bonds link cysteine 20–cysteine 35, cysteine 29–cysteine 41, cysteine 34–cysteine 48, and cysteine 54–cysteine 58. The propeptide occupies 61–66; the sequence is SGEGVG. The Barwin domain maps to 68-189; that stretch reads GSASNVLATY…VNYQFVDCGD (122 aa). Intrachain disulfides connect cysteine 96/cysteine 128, cysteine 117/cysteine 151, and cysteine 131/cysteine 187.

In terms of processing, proteolytically processed to yield the two chains of the mature protein. As to expression, laticifer.

Its function is as follows. N-acetyl-D-glucosamine / N-acetyl-D-neuraminic acid binding lectin. Can inhibit fungal growth. The sequence is that of Pro-hevein (HEV1) from Hevea brasiliensis (Para rubber tree).